The sequence spans 418 residues: AP-3 complex subunit mu-1 (418 aa).

The 242-residue stretch at 176–417 (NNEAYFDVVE…VTKAGKFQVR (242 aa)) folds into the MHD domain.

This sequence belongs to the adaptor complexes medium subunit family. In terms of assembly, adaptor protein complex 3 (AP-3) is a heterotetramer composed of two large adaptins (delta-type subunit AP3D1 and beta-type subunit AP3B1 or AP3B2), a medium adaptin (mu-type subunit AP3M1 or AP3M2) and a small adaptin (sigma-type subunit APS1 or AP3S2). Interacts with AGAP1. AP-3 associates with the BLOC-1 complex. (Microbial infection) Interacts with human respiratory virus (HRSV) matrix protein; this interaction plays an essential role in trafficking the matrix protein in host cells.

It localises to the golgi apparatus. It is found in the cytoplasmic vesicle membrane. In terms of biological role, part of the AP-3 complex, an adaptor-related complex which is not clathrin-associated. The complex is associated with the Golgi region as well as more peripheral structures. It facilitates the budding of vesicles from the Golgi membrane and may be directly involved in trafficking to lysosomes. In concert with the BLOC-1 complex, AP-3 is required to target cargos into vesicles assembled at cell bodies for delivery into neurites and nerve terminals. The sequence is that of AP-3 complex subunit mu-1 (AP3M1) from Homo sapiens (Human).